A 118-amino-acid polypeptide reads, in one-letter code: Holo-[acyl-carrier-protein] synthase (118 aa).

Mg(2+) is bound by residues Asp8 and Glu50.

This sequence belongs to the P-Pant transferase superfamily. AcpS family. It depends on Mg(2+) as a cofactor.

It is found in the cytoplasm. It carries out the reaction apo-[ACP] + CoA = holo-[ACP] + adenosine 3',5'-bisphosphate + H(+). Its function is as follows. Transfers the 4'-phosphopantetheine moiety from coenzyme A to a Ser of acyl-carrier-protein. The protein is Holo-[acyl-carrier-protein] synthase of Leifsonia xyli subsp. xyli (strain CTCB07).